The sequence spans 513 residues: Na(+)/H(+) antiporter NhaB (513 aa).

The next 12 helical transmembrane spans lie at 23 to 43 (LALI…PFVA), 52 to 72 (IFTL…LLAI), 97 to 117 (LLLM…LFIF), 120 to 140 (LLLS…AAAF), 144 to 164 (FLDA…FYGI), 202 to 222 (LMMH…VGEP), 238 to 258 (FFLR…LTCL), 303 to 323 (AIIG…VGLI), 348 to 368 (TESL…AVII), 391 to 411 (LFYI…VGTI), 447 to 467 (ATPN…APLI), and 475 to 495 (VWMA…CVEF).

This sequence belongs to the NhaB Na(+)/H(+) (TC 2.A.34) antiporter family.

Its subcellular location is the cell inner membrane. The catalysed reaction is 2 Na(+)(in) + 3 H(+)(out) = 2 Na(+)(out) + 3 H(+)(in). In terms of biological role, na(+)/H(+) antiporter that extrudes sodium in exchange for external protons. This chain is Na(+)/H(+) antiporter NhaB, found in Escherichia coli O127:H6 (strain E2348/69 / EPEC).